A 409-amino-acid polypeptide reads, in one-letter code: Peptidase T (409 aa).

Residue H78 participates in Zn(2+) binding. D80 is an active-site residue. A Zn(2+)-binding site is contributed by D140. The active-site Proton acceptor is the E173. Zn(2+) is bound by residues E174, D196, and H379.

This sequence belongs to the peptidase M20B family. Zn(2+) is required as a cofactor.

The protein resides in the cytoplasm. It catalyses the reaction Release of the N-terminal residue from a tripeptide.. Its function is as follows. Cleaves the N-terminal amino acid of tripeptides. This chain is Peptidase T, found in Salmonella heidelberg (strain SL476).